Reading from the N-terminus, the 103-residue chain is UPF0473 protein SSA_2239 (103 aa).

It belongs to the UPF0473 family.

This Streptococcus sanguinis (strain SK36) protein is UPF0473 protein SSA_2239.